The primary structure comprises 66 residues: uncharacterized protein (66 aa).

This is an uncharacterized protein from Homo sapiens (Human).